A 176-amino-acid polypeptide reads, in one-letter code: Protein GrpE (176 aa).

The interval 1 to 31 (MSEQKQEFENENAENSEHLQDENLQNIEDVE) is disordered.

The protein belongs to the GrpE family. In terms of assembly, homodimer.

It localises to the cytoplasm. In terms of biological role, participates actively in the response to hyperosmotic and heat shock by preventing the aggregation of stress-denatured proteins, in association with DnaK and GrpE. It is the nucleotide exchange factor for DnaK and may function as a thermosensor. Unfolded proteins bind initially to DnaJ; upon interaction with the DnaJ-bound protein, DnaK hydrolyzes its bound ATP, resulting in the formation of a stable complex. GrpE releases ADP from DnaK; ATP binding to DnaK triggers the release of the substrate protein, thus completing the reaction cycle. Several rounds of ATP-dependent interactions between DnaJ, DnaK and GrpE are required for fully efficient folding. This Campylobacter jejuni subsp. doylei (strain ATCC BAA-1458 / RM4099 / 269.97) protein is Protein GrpE.